A 362-amino-acid chain; its full sequence is Tyrosyl-DNA phosphodiesterase 2 (362 aa).

Met1 is modified (N-acetylmethionine). Residues 1 to 20 (MELGSCLEGGREAAEEEGEP) are disordered. Residues Lys23 and Lys82 each participate in a glycyl lysine isopeptide (Lys-Gly) (interchain with G-Cter in SUMO2) cross-link. Residues 87 to 109 (LTNEETTDSTTSKISPSEDTQQE) are disordered. 2 positions are modified to phosphothreonine; by ACVR1B: Thr88 and Thr92. The span at 94–109 (DSTTSKISPSEDTQQE) shows a compositional bias: polar residues. Ser95 is modified (phosphoserine). Positions 120-124 (NIDGL) are interaction with 5' end of substrate DNA. The Mg(2+) site is built by Asp122 and Glu152. An interaction with 5' end of substrate DNA region spans residues 226-231 (HLESTR). The Proton donor/acceptor role is filled by Asp262. Residues 264-266 (NLR) form an interaction with 5' end of substrate DNA region.

This sequence belongs to the CCR4/nocturin family. Interacts with TRAF2, TRAF3, TRAF5, TRAF6, TNFRSF8/CD30, TNFRSF5/CD40, TNFRSF1B/TNF-R75, ETS1, ETS2, FLI1, SMAD3 and ACVR1B/ALK4. In terms of assembly, (Microbial infection) Interacts with Hantaan hantavirus nucleoprotein. As to quaternary structure, (Microbial infection) Interacts with Seoul hantavirus nucleoprotein. Mg(2+) serves as cofactor. Requires Mn(2+) as cofactor. Post-translationally, ubiquitinated by TRAF6. As to expression, widely expressed. Highly expressed in various brain regions, including the frontal and occipital lobes, the hippocampus, the striatum and the cerebellum.

It localises to the nucleus. Its subcellular location is the PML body. The protein resides in the nucleolus. It is found in the cytoplasm. Its function is as follows. DNA repair enzyme that can remove a variety of covalent adducts from DNA through hydrolysis of a 5'-phosphodiester bond, giving rise to DNA with a free 5' phosphate. Catalyzes the hydrolysis of dead-end complexes between DNA and the topoisomerase 2 (TOP2) active site tyrosine residue. The 5'-tyrosyl DNA phosphodiesterase activity can enable the repair of TOP2-induced DNA double-strand breaks/DSBs without the need for nuclease activity, creating a 'clean' DSB with 5'-phosphate termini that are ready for ligation. Thereby, protects the transcription of many genes involved in neurological development and maintenance from the abortive activity of TOP2. Hydrolyzes 5'-phosphoglycolates on protruding 5' ends on DSBs due to DNA damage by radiation and free radicals. Has preference for single-stranded DNA or duplex DNA with a 4 base pair overhang as substrate. Acts as a regulator of ribosome biogenesis following stress. Also has 3'-tyrosyl DNA phosphodiesterase activity, but less efficiently and much slower than TDP1. Constitutes the major if not only 5'-tyrosyl-DNA phosphodiesterase in cells. Also acts as an adapter by participating in the specific activation of MAP3K7/TAK1 in response to TGF-beta: associates with components of the TGF-beta receptor-TRAF6-TAK1 signaling module and promotes their ubiquitination dependent complex formation. Involved in non-canonical TGF-beta induced signaling routes. May also act as a negative regulator of ETS1 and may inhibit NF-kappa-B activation. (Microbial infection) Used by picornaviruses to remove the small polypeptide, VPg (virus Protein genome-linked, the primer for viral RNA synthesis), from the genomic RNA of the virus. Acts as a 5'-tyrosyl RNA phosphodiesterase and cleaves the covalent VPg-Tyr-RNA bond. This cleavage would play a role in viral replication and occur in viral replication vesicles, but would not act on viral mRNA. This is Tyrosyl-DNA phosphodiesterase 2 from Homo sapiens (Human).